The sequence spans 300 residues: Bifunctional protein FolD (300 aa).

NADP(+) is bound by residues 169 to 171 and isoleucine 235; that span reads GHS.

Belongs to the tetrahydrofolate dehydrogenase/cyclohydrolase family. In terms of assembly, homodimer.

It catalyses the reaction (6R)-5,10-methylene-5,6,7,8-tetrahydrofolate + NADP(+) = (6R)-5,10-methenyltetrahydrofolate + NADPH. It carries out the reaction (6R)-5,10-methenyltetrahydrofolate + H2O = (6R)-10-formyltetrahydrofolate + H(+). Its pathway is one-carbon metabolism; tetrahydrofolate interconversion. In terms of biological role, catalyzes the oxidation of 5,10-methylenetetrahydrofolate to 5,10-methenyltetrahydrofolate and then the hydrolysis of 5,10-methenyltetrahydrofolate to 10-formyltetrahydrofolate. The sequence is that of Bifunctional protein FolD from Rhodobacter capsulatus (strain ATCC BAA-309 / NBRC 16581 / SB1003).